We begin with the raw amino-acid sequence, 539 residues long: Chaperonin GroEL (539 aa).

ATP-binding positions include 29–32 (TLGP), 86–90 (DGTTT), glycine 413, and aspartate 492.

The protein belongs to the chaperonin (HSP60) family. As to quaternary structure, forms a cylinder of 14 subunits composed of two heptameric rings stacked back-to-back. Interacts with the co-chaperonin GroES.

It localises to the cytoplasm. The catalysed reaction is ATP + H2O + a folded polypeptide = ADP + phosphate + an unfolded polypeptide.. Functionally, together with its co-chaperonin GroES, plays an essential role in assisting protein folding. The GroEL-GroES system forms a nano-cage that allows encapsulation of the non-native substrate proteins and provides a physical environment optimized to promote and accelerate protein folding. The polypeptide is Chaperonin GroEL (Fusobacterium nucleatum subsp. polymorphum (Fusobacterium polymorphum)).